The following is a 357-amino-acid chain: Cyclin-Y (357 aa).

The span at 1 to 13 (MGNSSCCLRTRSS) shows a compositional bias: polar residues. The tract at residues 1 to 23 (MGNSSCCLRTRSSSGEDKSYNND) is disordered. In terms of domain architecture, Cyclin N-terminal spans 186–284 (PDHRNIYRFV…RFLECLDFNI (99 aa)).

This sequence belongs to the cyclin family. In terms of assembly, interacts with pct-1; the interaction is required to activate pct-1.

It localises to the cytoplasm. The protein resides in the cell projection. Its subcellular location is the dendrite. The protein localises to the axon. Its function is as follows. In association with pct-1, regulates the trafficking of synaptic vesicle precursors in DA motor neurons by promoting anterograde trafficking to the axon and preventing dynein-dependent trafficking to the dendrite. May also regulate synaptic vesicle trafficking in DD motor neurons and in RIA interneurons. Involved in synapse formation during DD motor neuron remodeling by disassembling ventral presynaptic structures. May activate cdk-5. The protein is Cyclin-Y of Caenorhabditis elegans.